We begin with the raw amino-acid sequence, 434 residues long: Tryptophan synthase beta chain 2 (434 aa).

Residue Lys-110 is modified to N6-(pyridoxal phosphate)lysine.

It belongs to the TrpB family. In terms of assembly, tetramer of two alpha and two beta chains. Pyridoxal 5'-phosphate is required as a cofactor.

It catalyses the reaction (1S,2R)-1-C-(indol-3-yl)glycerol 3-phosphate + L-serine = D-glyceraldehyde 3-phosphate + L-tryptophan + H2O. It participates in amino-acid biosynthesis; L-tryptophan biosynthesis; L-tryptophan from chorismate: step 5/5. In terms of biological role, the beta subunit is responsible for the synthesis of L-tryptophan from indole and L-serine. This is Tryptophan synthase beta chain 2 (trpB2) from Aquifex aeolicus (strain VF5).